The chain runs to 132 residues: Large ribosomal subunit protein bL17 (132 aa).

Belongs to the bacterial ribosomal protein bL17 family. As to quaternary structure, part of the 50S ribosomal subunit. Contacts protein L32.

This is Large ribosomal subunit protein bL17 from Polaromonas sp. (strain JS666 / ATCC BAA-500).